The chain runs to 137 residues: Large ribosomal subunit protein bL17 (137 aa).

It belongs to the bacterial ribosomal protein bL17 family. As to quaternary structure, part of the 50S ribosomal subunit. Contacts protein L32.

This chain is Large ribosomal subunit protein bL17, found in Bradyrhizobium sp. (strain ORS 278).